Reading from the N-terminus, the 216-residue chain is Cytochrome c biogenesis ATP-binding export protein CcmA (216 aa).

The region spanning 18-216 is the ABC transporter domain; it reads LQVEGLAGRR…AHARTLEISA (199 aa). Residue 50-57 participates in ATP binding; sequence GHNGSGKT.

This sequence belongs to the ABC transporter superfamily. CcmA exporter (TC 3.A.1.107) family. The complex is composed of two ATP-binding proteins (CcmA) and two transmembrane proteins (CcmB).

It localises to the cell inner membrane. It catalyses the reaction heme b(in) + ATP + H2O = heme b(out) + ADP + phosphate + H(+). Its function is as follows. Part of the ABC transporter complex CcmAB involved in the biogenesis of c-type cytochromes; once thought to export heme, this seems not to be the case, but its exact role is uncertain. Responsible for energy coupling to the transport system. This chain is Cytochrome c biogenesis ATP-binding export protein CcmA, found in Nitrosococcus oceani (strain ATCC 19707 / BCRC 17464 / JCM 30415 / NCIMB 11848 / C-107).